Consider the following 780-residue polypeptide: Zinc finger and SCAN domain-containing protein 10 (780 aa).

The interval 1–38 (MLGESVPAAVEQEQLGEVKLEEEEAVSPEDPRRPESRL) is disordered. A compositionally biased stretch (basic and acidic residues) spans 29 to 38 (EDPRRPESRL). Residues 56 to 126 (MGPRASLSRL…LLLEGIHREP (71 aa)) form the SCAN box domain. Disordered regions lie at residues 153–237 (GCAS…SRDQ) and 255–324 (KAWP…GSLL). Phosphoserine is present on residues serine 162 and serine 208. Over residues 202–224 (SSKQPLSPGPQKTFQALQESSPQ) the composition is skewed to polar residues. Position 268 is a phosphothreonine (threonine 268). A compositionally biased stretch (basic and acidic residues) spans 268–280 (TPDKEEFKQEEPK). 14 consecutive C2H2-type zinc fingers follow at residues 347-370 (FICA…LRSH), 376-398 (FLCL…MRTH), 404-426 (HACH…LLTH), 432-454 (FLCA…LLAH), 476-498 (VLCS…LRIH), 522-544 (FVCS…RRVH), 550-572 (FSCQ…QRVH), 578-600 (YACP…LLTH), 606-628 (HHCT…QRSH), 634-656 (CRCS…QRIH), 662-684 (HACD…RRSH), 690-712 (YSCQ…LATH), 724-746 (QECV…LLVH), and 752-774 (YSCT…LRTH). At glutamine 483 the chain carries N5-methylglutamine. Residues 492–520 (KRHLRIHARDKDRRSSEGSGSRRRDSDRR) are disordered. Basic and acidic residues predominate over residues 498–520 (HARDKDRRSSEGSGSRRRDSDRR).

Interacts with POU5F1/OCT4 and SOX2. Methylated at Gln-483 by N6AMT1.

The protein localises to the nucleus. Its function is as follows. Embryonic stem (ES) cell-specific transcription factor required to maintain ES cell pluripotency. Can both activate and /or repress expression of target genes, depending on the context. Specifically binds the 5'-[GA]CGCNNGCG[CT]-3' DNA consensus sequence. Regulates expression of POU5F1/OCT4, ZSCAN4 and ALYREF/THOC4. The protein is Zinc finger and SCAN domain-containing protein 10 (ZSCAN10) of Homo sapiens (Human).